The sequence spans 142 residues: Multiprotein-bridging factor 1a (142 aa).

The span at 51 to 64 shows a compositional bias: polar residues; it reads GTNKAASSGTSLNT. The disordered stretch occupies residues 51 to 77; that stretch reads GTNKAASSGTSLNTKMLDDDTENLTHE. One can recognise an HTH cro/C1-type domain in the interval 87-141; that stretch reads IMQARTDKKLTQSQLAQIINEKPQVIQEYESGKAIPNQQILSKLERALGAKLRGK. A DNA-binding region (H-T-H motif) is located at residues 98–117; sequence QSQLAQIINEKPQVIQEYES.

The protein belongs to the MBF1 family. Expressed in leaves, roots, stems, flowers, siliques and shoots. Detected only in anthers and some seeds in siliques.

The protein localises to the nucleus. It localises to the nucleolus. Its function is as follows. Transcriptional coactivator that stimulates transcriptional activity by bridging regulatory proteins and TBP, thereby recruiting TBP to promoters occupied by DNA-binding regulators. This chain is Multiprotein-bridging factor 1a (MBF1A), found in Arabidopsis thaliana (Mouse-ear cress).